Consider the following 473-residue polypeptide: M-phase inducer phosphatase 3 (473 aa).

Positions 1–23 (MSTELFSSTREEGSSGSGPSFRS) are disordered. S2 bears the N-acetylserine mark. 2 positions are modified to phosphoserine: S20 and S38. A Phosphothreonine modification is found at T48. 3 positions are modified to phosphoserine: S57, S61, and S64. Residue T67 is modified to Phosphothreonine. S122 carries the phosphoserine; by CDK1 modification. Position 129 is a phosphoserine (S129). Position 130 is a phosphothreonine (T130). The tract at residues 132–158 (NGLDRGHRKRDAMCSSSANKENDNGNL) is disordered. Residues 145–158 (CSSSANKENDNGNL) are compositionally biased toward polar residues. Phosphoserine is present on S168. Phosphoserine; by PLK3 occurs at positions 191 and 198. S214 carries the post-translational modification Phosphoserine; by CDK1. S216 is modified (phosphoserine; by CHEK1, CHEK2, BRSK1, MAPK14 AND MARK3). A Rhodanese domain is found at 321-428 (LIEKFYVIDC…FFPEYMELCE (108 aa)). The interval 334-379 (YEYLGGHIQGALNLYSQEELFNFFLKKPIVPLDTQKRIIIVFHCEF) is HIV-1 Vpr binding site. The active site involves C377. S472 is modified (phosphoserine).

It belongs to the MPI phosphatase family. As to quaternary structure, interacts with MAPK14 and 14-3-3 proteins. When phosphorylated on Ser-129 and/or Thr-130, interacts with PLK1. Interacts with MARK3/C-TAK1. In terms of assembly, (Microbial infection) Interacts with HIV-1 Vpr; this interaction inactivates CDC25C phosphatase activity. Post-translationally, phosphorylated by CHEK1 and MAPK14 at Ser-216. This phosphorylation creates a binding site for 14-3-3 protein and inhibits the phosphatase. Phosphorylated by PLK4. Phosphorylated by PLK1, leading to activate the phosphatase activity. Phosphorylation by PLK3 at Ser-191 promotes nuclear translocation. Ser-198 is a minor phosphorylation site. Was initially reported to be phosphorylated by PLK3 at Ser-216. However, such phosphorylation by PLK3 was not confirmed by other groups. Phosphorylation at Thr-48, Thr-67, Ser-122, Thr-130, Ser-168 and Ser-214 occurs at G2 and G2-M transition and is probably catalyzed by CDK1. Ser-168 phosphorylation levels are lower than those at the other 5 CDK1 sites. Phosphorylation by CDK1 leads to increased activity.

It localises to the nucleus. It catalyses the reaction O-phospho-L-tyrosyl-[protein] + H2O = L-tyrosyl-[protein] + phosphate. In terms of biological role, functions as a dosage-dependent inducer in mitotic control. Tyrosine protein phosphatase required for progression of the cell cycle. When phosphorylated, highly effective in activating G2 cells into prophase. Directly dephosphorylates CDK1 and activates its kinase activity. The protein is M-phase inducer phosphatase 3 (CDC25C) of Homo sapiens (Human).